Here is a 34-residue protein sequence, read N- to C-terminus: Potassium channel toxin alpha-KTx 6.3 (34 aa).

Disulfide bonds link cysteine 3/cysteine 24, cysteine 9/cysteine 29, cysteine 13/cysteine 31, and cysteine 19/cysteine 34. Cysteine amide is present on cysteine 34.

The protein belongs to the short scorpion toxin superfamily. Potassium channel inhibitor family. Alpha-KTx 06 subfamily. In terms of processing, amidated. The amidated toxin shows 5-fold more affinity for Kv1.3/KCNA3 than the synthetic carboxylated form. In terms of tissue distribution, expressed by the venom gland.

The protein localises to the secreted. Functionally, potently blocks voltage-gated potassium channels Kv1.1/KCNA1 (IC(50)=7-11 nM) and Kv1.3/KCNA3 (IC(50)=11-29 pM). Also mildly blocks intermediate (IK) conductance calcium-activated potassium channels (KCa3.1/KCNN4) and ERG1/Kv11.1/KCNH2. Shows ability to suppress proliferation of lymphocytes, which are known to be sensitive to Kv1.3/KCNA3 homotetrameric channel block. The protein is Potassium channel toxin alpha-KTx 6.3 of Heterometrus spinifer (Asia giant forest scorpion).